The following is a 188-amino-acid chain: Probable DNA-directed RNA polymerase subunit delta (188 aa).

The 68-residue stretch at 14–81 (LSMIEVAHAL…GNNVWALRSW (68 aa)) folds into the HTH HARE-type domain. Positions 96–188 (EIEDEEEEEK…EDDSDDTDED (93 aa)) are disordered. 2 stretches are compositionally biased toward acidic residues: residues 118 to 150 (IEDEIDPEDEEGTKETTEEDMSYDTQAEDEDKD) and 158 to 188 (ELAEVELDNVDEEVDIEVEDDEDDSDDTDED).

This sequence belongs to the RpoE family. In terms of assembly, RNAP is composed of a core of 2 alpha, a beta and a beta' subunits. The core is associated with a delta subunit and one of several sigma factors.

In terms of biological role, participates in both the initiation and recycling phases of transcription. In the presence of the delta subunit, RNAP displays an increased specificity of transcription, a decreased affinity for nucleic acids, and an increased efficiency of RNA synthesis because of enhanced recycling. This Lactococcus lactis subsp. cremoris (strain MG1363) protein is Probable DNA-directed RNA polymerase subunit delta.